The following is a 318-amino-acid chain: HPr kinase/phosphorylase (318 aa).

Residues His-141 and Lys-162 contribute to the active site. 156 to 163 contributes to the ATP binding site; the sequence is GDSAMGKS. Residue Ser-163 coordinates Mg(2+). The active-site Proton acceptor; for phosphorylation activity. Proton donor; for dephosphorylation activity is Asp-180. Residues 204 to 213 form an important for the catalytic mechanism of both phosphorylation and dephosphorylation region; the sequence is LEVRGLGILN. Glu-205 lines the Mg(2+) pocket. Arg-248 is an active-site residue. The interval 269–274 is important for the catalytic mechanism of dephosphorylation; that stretch reads PVAAGR.

It belongs to the HPrK/P family. In terms of assembly, homohexamer. It depends on Mg(2+) as a cofactor.

It carries out the reaction [HPr protein]-L-serine + ATP = [HPr protein]-O-phospho-L-serine + ADP + H(+). The enzyme catalyses [HPr protein]-O-phospho-L-serine + phosphate + H(+) = [HPr protein]-L-serine + diphosphate. Functionally, catalyzes the ATP- as well as the pyrophosphate-dependent phosphorylation of a specific serine residue in HPr, a phosphocarrier protein of the phosphoenolpyruvate-dependent sugar phosphotransferase system (PTS). HprK/P also catalyzes the pyrophosphate-producing, inorganic phosphate-dependent dephosphorylation (phosphorolysis) of seryl-phosphorylated HPr (P-Ser-HPr). The polypeptide is HPr kinase/phosphorylase (Chromobacterium violaceum (strain ATCC 12472 / DSM 30191 / JCM 1249 / CCUG 213 / NBRC 12614 / NCIMB 9131 / NCTC 9757 / MK)).